Reading from the N-terminus, the 208-residue chain is Protein-L-isoaspartate O-methyltransferase (208 aa).

Serine 59 is an active-site residue.

This sequence belongs to the methyltransferase superfamily. L-isoaspartyl/D-aspartyl protein methyltransferase family.

It is found in the cytoplasm. The enzyme catalyses [protein]-L-isoaspartate + S-adenosyl-L-methionine = [protein]-L-isoaspartate alpha-methyl ester + S-adenosyl-L-homocysteine. Catalyzes the methyl esterification of L-isoaspartyl residues in peptides and proteins that result from spontaneous decomposition of normal L-aspartyl and L-asparaginyl residues. It plays a role in the repair and/or degradation of damaged proteins. The polypeptide is Protein-L-isoaspartate O-methyltransferase (Shigella sonnei (strain Ss046)).